A 441-amino-acid chain; its full sequence is MAGUK p55 subfamily member 4 (441 aa).

The 84-residue stretch at 1 to 84 (MRTVCLVKNQ…TIMFKVIPVS (84 aa)) folds into the PDZ domain. Residues 91 to 161 (QTTVYVRAMI…PSNHLLKRKQ (71 aa)) enclose the SH3 domain. Positions 232 to 421 (HRLIVLVGPS…ARAQLLSAIQ (190 aa)) constitute a Guanylate kinase-like domain. Residues 373 to 430 (VDMKFKDEDLQEMEELAQKMESQFGQFFDHVIVNDNLQDARAQLLSAIQKAEEELQWV) are a coiled coil.

This sequence belongs to the MAGUK family. Interacts with MPDZ. May interact with GRIA2. Forms a complex with CRB1 and PALS1. Interacts with FASLG. As to expression, highly expressed in brain and detected in lung, and bone (at protein level). Also expressed in intestine and spleen.

It localises to the cytoplasm. Functionally, may play a role in retinal photoreceptors development. The protein is MAGUK p55 subfamily member 4 (Mpp4) of Rattus norvegicus (Rat).